The following is a 433-amino-acid chain: Serine/threonine-protein kinase toxin HipA (433 aa).

Serine 147 carries the phosphoserine; by autocatalysis modification. Residues 151 to 154 (VQPK), lysine 178, and 220 to 222 (ERF) each bind ATP. Aspartate 306 (proton acceptor) is an active-site residue. Residues 308-311 (HGKN) and 327-328 (YD) each bind ATP. DNA-binding regions lie at residues 380-384 (RIARR) and arginine 429.

The protein belongs to the HipA Ser/Thr kinase family. As to quaternary structure, monomer. Forms a HipA(2)HipB(2)-DNA complex with cognate antitoxin HipB; has higher affinity for the latter when HipB is prebound to DNA and HipA is phosphorylated. Binds DNA in the ternary complex.

It carries out the reaction L-seryl-[protein] + ATP = O-phospho-L-seryl-[protein] + ADP + H(+). It catalyses the reaction L-threonyl-[protein] + ATP = O-phospho-L-threonyl-[protein] + ADP + H(+). Toxic component of a type II toxin-antitoxin (TA) system; overexpression in wild-type temporarily inhibits cell growth, overexpression in a hipAB deletion leads to acute growth inhibition. The toxic effect of HipA is neutralized by its cognate antitoxin HipB. In the ternary phosphoserine-HipA-HipB-DNA complex the DNA is bent about 125 degrees; all HipA in the crystallized ternary complex is phosphorylated. In E.coli phosphorylation of HipA is thought to release HipB from the HipA-HipB-DNA complex, suggesting the complex functions differently in the 2 bacteria. Phosphorylates Glu-tRNA-ligase (GltX, on 'Ser-239') in vivo, with HipB probably acts as a corepressor for transcription of the hipBA promoter. The polypeptide is Serine/threonine-protein kinase toxin HipA (Shewanella oneidensis (strain ATCC 700550 / JCM 31522 / CIP 106686 / LMG 19005 / NCIMB 14063 / MR-1)).